Here is a 1180-residue protein sequence, read N- to C-terminus: IQ domain-containing protein N (1180 aa).

A disordered region spans residues 34-78 (HPPAPAHPSLLDKMEKAPPQPQHEGLKSKEHLPQQPAEGKTASRR). In terms of domain architecture, IQ 1 spans 103 to 132 (HARAATLIQANWRGYWLRQKLISQMMAAKA). Disordered regions lie at residues 283-324 (RVSA…ETPK), 476-496 (MSKTSSQRSPVGVTKPSPQTR), and 786-820 (QRLGGLSAPPWAKPEDRQTQPQPHGHVPGKTTQGG). IQ domains lie at 926 to 955 (RILAVITIQAGVRGYLARRRIRLWHRGAMV), 956 to 978 (IQATWRGYRVRRNLAHLCRATTT), 979 to 1001 (IQSAWRGYSTRRDQARHWQMLHP), 1113 to 1142 (QDKAATAIQSAWRGFKIRQQMRQQQMAAKI), and 1143 to 1165 (VQATWRGHHTRSCLKNTEALLGP).

As to quaternary structure, interacts with calmodulin.

Essential for spermiogenesis and fertilization. May be required for manchette assembly in elongating spermatids. The chain is IQ domain-containing protein N from Homo sapiens (Human).